A 256-amino-acid chain; its full sequence is 5'-nucleotidase SurE (256 aa).

A divalent metal cation is bound by residues Asp-8, Asp-9, Ser-40, and Asn-92.

Belongs to the SurE nucleotidase family. The cofactor is a divalent metal cation.

The protein localises to the cytoplasm. It carries out the reaction a ribonucleoside 5'-phosphate + H2O = a ribonucleoside + phosphate. In terms of biological role, nucleotidase that shows phosphatase activity on nucleoside 5'-monophosphates. The chain is 5'-nucleotidase SurE from Sinorhizobium fredii (strain NBRC 101917 / NGR234).